A 239-amino-acid polypeptide reads, in one-letter code: Ubiquinone biosynthesis O-methyltransferase (239 aa).

Positions 44, 63, 84, and 128 each coordinate S-adenosyl-L-methionine.

The protein belongs to the methyltransferase superfamily. UbiG/COQ3 family.

The enzyme catalyses a 3-demethylubiquinol + S-adenosyl-L-methionine = a ubiquinol + S-adenosyl-L-homocysteine + H(+). It carries out the reaction a 3-(all-trans-polyprenyl)benzene-1,2-diol + S-adenosyl-L-methionine = a 2-methoxy-6-(all-trans-polyprenyl)phenol + S-adenosyl-L-homocysteine + H(+). It functions in the pathway cofactor biosynthesis; ubiquinone biosynthesis. In terms of biological role, O-methyltransferase that catalyzes the 2 O-methylation steps in the ubiquinone biosynthetic pathway. The polypeptide is Ubiquinone biosynthesis O-methyltransferase (Xanthomonas oryzae pv. oryzae (strain MAFF 311018)).